The primary structure comprises 339 residues: UDP-galactose transporter homolog 1 (339 aa).

Over 1–4 the chain is Lumenal; it reads MAGS. Residues 5–25 form a helical membrane-spanning segment; it reads TSSLVICAIGIYATFLTWALV. At 26–42 the chain is on the cytoplasmic side; the sequence is QEPLATRTWPNSMGKFQ. The helical transmembrane segment at 43 to 63 threads the bilayer; the sequence is FPNVISLIQASVAMMMGYLYL. Topologically, residues 64 to 106 are lumenal; it reads NWKKVEYPPRKMIKDHWKQLMLISFTQSSSGPLATTSLKHVDY. The chain crosses the membrane as a helical span at residues 107 to 127; it reads LTYMLAKSCKMIPVLLVHLLL. The Cytoplasmic portion of the chain corresponds to 128 to 136; it reads YRTPIASQK. Residues 137-157 traverse the membrane as a helical segment; that stretch reads KVVALLVSLGVTIFTIGGNDG. The Lumenal segment spans residues 158 to 174; that stretch reads KKLKRSFNESGNDNKLQ. Residue Asn-165 is glycosylated (N-linked (GlcNAc...) asparagine). The helical transmembrane segment at 175-192 threads the bilayer; sequence GFGLLFSSLFLDGLTNAT. Topologically, residues 193 to 214 are cytoplasmic; that stretch reads QDKLLKANKAKEKGKQTLITGA. A helical transmembrane segment spans residues 215–235; sequence HLMFTLNLFVILWNILYFIVI. At 236-245 the chain is on the lumenal side; sequence DCKQWDNAVS. A helical membrane pass occupies residues 246 to 266; the sequence is VLTMDPQVWGYLMLYSFCGAM. Over 267–280 the chain is Cytoplasmic; it reads GQCFIFYTLEQFGS. The chain crosses the membrane as a helical span at residues 281-303; that stretch reads LVLIMITVTRKMVSMILSIIVFG. Topologically, residues 304–307 are lumenal; sequence KSVR. A helical membrane pass occupies residues 308–327; that stretch reads FQQWVGMFIVFGGITWEALN. Residues 328–339 are Cytoplasmic-facing; it reads KKKANIPKAKSA.

The protein belongs to the nucleotide-sugar transporter family. SLC35B subfamily.

The protein resides in the endoplasmic reticulum membrane. May be involved in specific transport of UDP-Gal from the cytosol to the Golgi lumen. Involved in the maintenance of optimal conditions for the folding of secretory pathway proteins in the endoplasmic reticulum. Overexpression confers resistance to the immunosuppressive drug, leflunomide. The chain is UDP-galactose transporter homolog 1 (HUT1) from Saccharomyces cerevisiae (strain ATCC 204508 / S288c) (Baker's yeast).